The following is a 119-amino-acid chain: UPF0102 protein FP2501 (119 aa).

The protein belongs to the UPF0102 family.

This is UPF0102 protein FP2501 from Flavobacterium psychrophilum (strain ATCC 49511 / DSM 21280 / CIP 103535 / JIP02/86).